A 304-amino-acid polypeptide reads, in one-letter code: Acetyl-coenzyme A carboxylase carboxyl transferase subunit beta (304 aa).

The CoA carboxyltransferase N-terminal domain occupies 25-294; that stretch reads VWTKCDSCGQ…PSVVESKADT (270 aa). Cysteine 29, cysteine 32, cysteine 48, and cysteine 51 together coordinate Zn(2+). The C4-type zinc finger occupies 29-51; the sequence is CDSCGQVLYRAELERNLEVCPKC.

This sequence belongs to the AccD/PCCB family. Acetyl-CoA carboxylase is a heterohexamer composed of biotin carboxyl carrier protein (AccB), biotin carboxylase (AccC) and two subunits each of ACCase subunit alpha (AccA) and ACCase subunit beta (AccD). It depends on Zn(2+) as a cofactor.

Its subcellular location is the cytoplasm. It catalyses the reaction N(6)-carboxybiotinyl-L-lysyl-[protein] + acetyl-CoA = N(6)-biotinyl-L-lysyl-[protein] + malonyl-CoA. It participates in lipid metabolism; malonyl-CoA biosynthesis; malonyl-CoA from acetyl-CoA: step 1/1. In terms of biological role, component of the acetyl coenzyme A carboxylase (ACC) complex. Biotin carboxylase (BC) catalyzes the carboxylation of biotin on its carrier protein (BCCP) and then the CO(2) group is transferred by the transcarboxylase to acetyl-CoA to form malonyl-CoA. The polypeptide is Acetyl-coenzyme A carboxylase carboxyl transferase subunit beta (Yersinia pestis bv. Antiqua (strain Nepal516)).